Here is a 220-residue protein sequence, read N- to C-terminus: Ribose-5-phosphate isomerase A (220 aa).

Substrate is bound by residues 29–32 (TGST), 82–85 (DGCD), and 95–98 (KGGG). The active-site Proton acceptor is glutamate 104. Lysine 122 lines the substrate pocket.

Belongs to the ribose 5-phosphate isomerase family. As to quaternary structure, homodimer.

The catalysed reaction is aldehydo-D-ribose 5-phosphate = D-ribulose 5-phosphate. It participates in carbohydrate degradation; pentose phosphate pathway; D-ribose 5-phosphate from D-ribulose 5-phosphate (non-oxidative stage): step 1/1. In terms of biological role, catalyzes the reversible conversion of ribose-5-phosphate to ribulose 5-phosphate. This Laribacter hongkongensis (strain HLHK9) protein is Ribose-5-phosphate isomerase A.